The primary structure comprises 370 residues: tRNA-specific 2-thiouridylase MnmA (370 aa).

Residues 7–14 (GISGGVDS) and methionine 33 each bind ATP. The interval 104–106 (NPD) is interaction with target base in tRNA. Cysteine 109 (nucleophile) is an active-site residue. A disulfide bridge connects residues cysteine 109 and cysteine 208. An ATP-binding site is contributed by glycine 134. The interaction with tRNA stretch occupies residues 158–160 (KDQ). The active-site Cysteine persulfide intermediate is the cysteine 208.

The protein belongs to the MnmA/TRMU family.

It localises to the cytoplasm. It catalyses the reaction S-sulfanyl-L-cysteinyl-[protein] + uridine(34) in tRNA + AH2 + ATP = 2-thiouridine(34) in tRNA + L-cysteinyl-[protein] + A + AMP + diphosphate + H(+). Its function is as follows. Catalyzes the 2-thiolation of uridine at the wobble position (U34) of tRNA, leading to the formation of s(2)U34. This chain is tRNA-specific 2-thiouridylase MnmA, found in Malacoplasma penetrans (strain HF-2) (Mycoplasma penetrans).